The sequence spans 400 residues: MSKTIAINAGSSSLKWQLYQMPEEKVLAQGIIERIGLTDSISTVKYDGKKEEHILDIPDHTEAVKRLLNDLIHFGIIDTYDEITGVGHRIVAGGEYFKESVVVDDKVVEQVEELAALAPLHNPGAAAGIRAFRKILPDITSVCVFDTSFHTTMQKHTYLYPIPQKYYTDYKVRKYGAHGTSHKYVAEEAAKMLGRPLDELKLITAHVGNGVSITANYHGQSVDTSMGFTPLAGPMMGTRSGDIDPAIIPYLIAQDPELKDAADVVNMLNKQSGLGGVSGISSDMRDIEAGLQANNPDAVLAYNIFIDRIKKFIGQYFAVLNGADALVFTAGMGENAPLMRQDVVNGLSWFGMEIDPEKNVFGYRGDISTAASKVKVLVISTDEELCIARDVERLKKTVSS.

Residue Asn8 participates in Mg(2+) binding. Position 15 (Lys15) interacts with ATP. Residue Arg89 coordinates substrate. Catalysis depends on Asp146, which acts as the Proton donor/acceptor. ATP is bound by residues 206–210, 283–285, and 331–335; these read HVGNG, DMR, and GMGEN. Glu383 serves as a coordination point for Mg(2+).

It belongs to the acetokinase family. As to quaternary structure, homodimer. Mg(2+) serves as cofactor. It depends on Mn(2+) as a cofactor.

The protein resides in the cytoplasm. The catalysed reaction is acetate + ATP = acetyl phosphate + ADP. The protein operates within metabolic intermediate biosynthesis; acetyl-CoA biosynthesis; acetyl-CoA from acetate: step 1/2. Catalyzes the formation of acetyl phosphate from acetate and ATP. Can also catalyze the reverse reaction. In Streptococcus equi subsp. zooepidemicus (strain MGCS10565), this protein is Acetate kinase.